We begin with the raw amino-acid sequence, 128 residues long: Large ribosomal subunit protein bL12 (128 aa).

It belongs to the bacterial ribosomal protein bL12 family. In terms of assembly, homodimer. Part of the ribosomal stalk of the 50S ribosomal subunit. Forms a multimeric L10(L12)X complex, where L10 forms an elongated spine to which 2 to 4 L12 dimers bind in a sequential fashion. Binds GTP-bound translation factors.

Functionally, forms part of the ribosomal stalk which helps the ribosome interact with GTP-bound translation factors. Is thus essential for accurate translation. In Streptomyces antibioticus, this protein is Large ribosomal subunit protein bL12.